A 339-amino-acid polypeptide reads, in one-letter code: MENILHATPAHVSLPESFVFASDKVPPATKAVVSLPIIDLSCGRDEVRRSILEAGKELGFFQVVNHGVSKQVMRDMEGMCEQFFHLPAADKASLYSEERHKPNRLFSGATYDTGGEKYWRDCLRLACPFPVDDSINEWPDTPKGLRDVIEKFTSQTRDVGKELLRLLCEGMGIQADYFEGDLSGGNVILNINHYPSCPNPDKALGQPPHCDRNLITLLLPGAVNGLEVSYKGDWIKVDPAPNAFVVNFGQQLEVVTNGLLKSIEHRAMTNSALARTSVATFIMPTQECLIGPAKEFLSKENPPCYRTTMFRDFMRIYNVVKLGSSLNLTTNLKNVQKEI.

The Fe2OG dioxygenase domain maps to 184 to 284; the sequence is GGNVILNINH…RTSVATFIMP (101 aa). Fe cation is bound by residues His209, Asp211, and His265. Arg275 contacts 2-oxoglutarate.

The protein belongs to the iron/ascorbate-dependent oxidoreductase family. The cofactor is Fe(2+). L-ascorbate serves as cofactor. The N-terminus is blocked.

Its subcellular location is the cytoplasm. The enzyme catalyses 2'-deoxymugineate + 2-oxoglutarate + O2 = mugineate + succinate + CO2. Functionally, involved in the biosynthesis of mugineic acid family of phytosiderophores. Hydroxylates the C-2' positions of 2'-deoxymugineic acid (DMA) and 3-epihydroxymugineic acid (epiHDMA). May be involved in boron tolerance. The sequence is that of 2'-deoxymugineic-acid 2'-dioxygenase from Hordeum vulgare (Barley).